We begin with the raw amino-acid sequence, 254 residues long: L-arabinose 1-dehydrogenase (NAD(P)(+)) (254 aa).

Catalysis depends on Tyr142, which acts as the Proton acceptor. Residues Tyr142 and Lys146 each contribute to the NAD(+) site.

Belongs to the NAD(P)-dependent epimerase/dehydratase family. As to quaternary structure, homotetramer.

The enzyme catalyses alpha-L-arabinopyanose + NAD(+) = L-arabinono-1,4-lactone + NADH + H(+). It catalyses the reaction alpha-L-arabinopyanose + NADP(+) = L-arabinono-1,4-lactone + NADPH + H(+). Its pathway is carbohydrate degradation; L-arabinose degradation via L-arabinono-1,4-lactone pathway. Functionally, L-AraDH initiates the degradation of L-arabinose. Catalyzes the NAD(P)(+)-dependent conversion of L-arabinose to L-arabino-gamma-lactone. It is highly specific for L-arabinose as substrate and can use both NADP(+) and NAD(+) as electron acceptor, with a slight preference for NADP(+). This is L-arabinose 1-dehydrogenase (NAD(P)(+)) from Haloferax volcanii (strain ATCC 29605 / DSM 3757 / JCM 8879 / NBRC 14742 / NCIMB 2012 / VKM B-1768 / DS2) (Halobacterium volcanii).